The chain runs to 593 residues: Elongation factor 4 (593 aa).

Residues 2–181 enclose the tr-type G domain; the sequence is KNIRNFCIIA…AVVERIPHPT (180 aa). Residues 14 to 19 and 128 to 131 each bind GTP; these read DHGKST and NKCD.

The protein belongs to the TRAFAC class translation factor GTPase superfamily. Classic translation factor GTPase family. LepA subfamily.

It is found in the cell inner membrane. The enzyme catalyses GTP + H2O = GDP + phosphate + H(+). Its function is as follows. Required for accurate and efficient protein synthesis under certain stress conditions. May act as a fidelity factor of the translation reaction, by catalyzing a one-codon backward translocation of tRNAs on improperly translocated ribosomes. Back-translocation proceeds from a post-translocation (POST) complex to a pre-translocation (PRE) complex, thus giving elongation factor G a second chance to translocate the tRNAs correctly. Binds to ribosomes in a GTP-dependent manner. This chain is Elongation factor 4, found in Phocaeicola vulgatus (strain ATCC 8482 / DSM 1447 / JCM 5826 / CCUG 4940 / NBRC 14291 / NCTC 11154) (Bacteroides vulgatus).